The sequence spans 263 residues: Outer membrane protein OmpK (263 aa).

Positions 1–20 (MRKSLLALSLLAATSAPVLA) are cleaved as a signal peptide.

Belongs to the nucleoside-specific channel-forming outer membrane porin (Tsx) (TC 1.B.10) family.

It is found in the cell outer membrane. Serves as receptor for a broad-host-range vibriophage, KVP40. This Vibrio parahaemolyticus protein is Outer membrane protein OmpK.